Consider the following 317-residue polypeptide: Nucleosome assembly protein 1;4 (317 aa).

The Nuclear export signal signature appears at 52-67 (LSPKVTKRVLFLKDIQ). The short motif at 214–219 (KKKTKK) is the Nuclear localization signal element. The segment at 297–317 (ALVDEDDSDDNDDDDNDEKSD) is disordered. Over residues 298-317 (LVDEDDSDDNDDDDNDEKSD) the composition is skewed to acidic residues.

This sequence belongs to the nucleosome assembly protein (NAP) family. In terms of assembly, can form homomeric and heteromeric protein complexes with NAP1;1, NAP1;2 and NAP1;3. Binds histone H2A. In terms of tissue distribution, expressed in the root segment covering the apical end of the differentiation zone, the elongation zone of the root and the mature pollen within the anthers of open flowers.

It localises to the nucleus. The protein localises to the cytoplasm. Functionally, may modulate chromatin structure by regulation of nucleosome assembly/disassembly. This Arabidopsis thaliana (Mouse-ear cress) protein is Nucleosome assembly protein 1;4 (NAP1;4).